A 196-amino-acid polypeptide reads, in one-letter code: uncharacterized protein (196 aa).

Residues 20 to 40 (GALALGCIALLLMGIVGCTTV) form a helical membrane-spanning segment.

It localises to the membrane. This is an uncharacterized protein from Mycobacterium tuberculosis (strain CDC 1551 / Oshkosh).